The primary structure comprises 121 residues: Dihydroneopterin aldolase (121 aa).

Residues glutamate 22, tyrosine 54, and 73 to 74 (LE) contribute to the substrate site. Lysine 100 acts as the Proton donor/acceptor in catalysis.

This sequence belongs to the DHNA family. As to quaternary structure, homooctamer. Four molecules assemble into a ring, and two rings come together to give a cylinder with a hole of at least 13 a diameter.

It catalyses the reaction 7,8-dihydroneopterin = 6-hydroxymethyl-7,8-dihydropterin + glycolaldehyde. It carries out the reaction 7,8-dihydroneopterin = 7,8-dihydromonapterin. It participates in cofactor biosynthesis; tetrahydrofolate biosynthesis; 2-amino-4-hydroxy-6-hydroxymethyl-7,8-dihydropteridine diphosphate from 7,8-dihydroneopterin triphosphate: step 3/4. Its function is as follows. Catalyzes the conversion of 7,8-dihydroneopterin to 6-hydroxymethyl-7,8-dihydropterin. Can also catalyze the epimerization of carbon 2' of dihydroneopterin to dihydromonapterin. The sequence is that of Dihydroneopterin aldolase (folB) from Staphylococcus aureus (strain COL).